A 75-amino-acid chain; its full sequence is uncharacterized protein (75 aa).

This is an uncharacterized protein from Methanocaldococcus jannaschii (strain ATCC 43067 / DSM 2661 / JAL-1 / JCM 10045 / NBRC 100440) (Methanococcus jannaschii).